Here is a 747-residue protein sequence, read N- to C-terminus: Polyribonucleotide nucleotidyltransferase (747 aa).

The Mg(2+) site is built by Asp-502 and Asp-508. Positions 569 to 628 (PRMLTITIDPDKIRDIIGPGGKIIKKIIEETGVEIDVEDDGRVFIASTDAAAGERALKII) constitute a KH domain. Residues 638–712 (GKVYNGKVTR…PQGRLKLSRK (75 aa)) form the S1 motif domain. Residues 718 to 747 (STVGEGGHRHFRRAGREGGHRGLNNRRQSR) form a disordered region.

This sequence belongs to the polyribonucleotide nucleotidyltransferase family. Mg(2+) is required as a cofactor.

Its subcellular location is the cytoplasm. It catalyses the reaction RNA(n+1) + phosphate = RNA(n) + a ribonucleoside 5'-diphosphate. In terms of biological role, involved in mRNA degradation. Catalyzes the phosphorolysis of single-stranded polyribonucleotides processively in the 3'- to 5'-direction. This is Polyribonucleotide nucleotidyltransferase from Moorella thermoacetica (strain ATCC 39073 / JCM 9320).